A 389-amino-acid polypeptide reads, in one-letter code: MRVSKVLTLASFISVCSYSEAKSNETDPNGYIVFCPCMGRFGNQVDQFLGVLAFAKALDRTLVLPNFIEFKHPETKMIPFEFLFQVGTVAKYTRVVTMQEFTKKIMPTVWPPEKRKAFCWTPRQAIYDKSAEPGCHSKEGNPFGPYWDQIDVSFVGDEYFGDIPGGFDLNQMGSRKKWLEKFPSEEYPVLAFSSAPAPFPSKGKVWSIQKYLRWSSRITEQAKKFISANLAKPFVAVHLRNDADWVRVCEHIDTTTNRPLFASEQCLGEGHHLGTLTKEICSPSKQQILEQIVEKVGSIGAKSVFVASDKDHMIDEINEALKPYEIEAHRQEPDDMYTSLAIMGRADLFVGNCVSTFSHIVKRERDHAGQSPRPSAFFGIRAVKRHIDL.

The first 21 residues, methionine 1–alanine 21, serve as a signal peptide directing secretion. N-linked (GlcNAc...) asparagine glycosylation occurs at asparagine 24. Cysteine 35 and cysteine 37 are joined by a disulfide. Arginine 40–asparagine 43 provides a ligand contact to substrate. A disulfide bridge connects residues cysteine 119 and cysteine 135. Residue histidine 238–arginine 240 participates in substrate binding. 2 disulfide bridges follow: cysteine 249/cysteine 281 and cysteine 266/cysteine 353. Threonine 356–phenylalanine 357 contributes to the substrate binding site.

It belongs to the glycosyltransferase 65 family. As to quaternary structure, monomer.

It is found in the endoplasmic reticulum. The catalysed reaction is L-seryl-[protein] + GDP-beta-L-fucose = 3-O-(alpha-L-fucosyl)-L-seryl-[protein] + GDP + H(+). The enzyme catalyses L-threonyl-[protein] + GDP-beta-L-fucose = 3-O-(alpha-L-fucosyl)-L-threonyl-[protein] + GDP + H(+). It functions in the pathway protein modification; protein glycosylation. In terms of biological role, catalyzes the reaction that attaches fucose through an O-glycosidic linkage to a conserved serine or threonine residue found in the consensus sequence C2-X(4,5)-[S/T]-C3 of EGF domains, where C2 and C3 are the second and third conserved cysteines. Specifically uses GDP-fucose as donor substrate and proper disulfide pairing of the substrate EGF domains is required for fucose transfer. In Caenorhabditis elegans, this protein is GDP-fucose protein O-fucosyltransferase 1.